Consider the following 409-residue polypeptide: uncharacterized protein (409 aa).

The first 26 residues, Met-1–Ala-26, serve as a signal peptide directing secretion.

This is an uncharacterized protein from Bacillus subtilis (strain 168).